We begin with the raw amino-acid sequence, 445 residues long: Protein kinase C and casein kinase substrate in neurons protein 1 (445 aa).

One can recognise an F-BAR domain in the interval 12–282; the sequence is DETTDSFWEV…TIVSASAQED (271 aa). Coiled-coil stretches lie at residues 146–167 and 183–219; these read AKKL…KEEK and TTDQ…NKCT. The tract at residues 327-390 is disordered; the sequence is LTQVTHGAEH…PFEEDSKGVR (64 aa). Polar residues-rich tracts occupy residues 338–358 and 368–379; these read TPQT…QYSA and TAAQSASETNGG. The 60-residue stretch at 386–445 folds into the SH3 domain; sequence SKGVRVRALYDYEGQEQDELTFKAGDELTKLEDEDEQGWCKGRLDSGQLGLYPANYVEPV.

In terms of assembly, interacts with cobl.

It localises to the cytoplasm. Its subcellular location is the cytosol. The protein localises to the cell membrane. The protein resides in the cell projection. It is found in the synapse. It localises to the synaptosome. Its subcellular location is the cytoplasmic vesicle membrane. The protein localises to the ruffle membrane. The protein resides in the membrane. Its function is as follows. Binds to membranes via its F-BAR domain and mediates membrane tubulation. Plays a role in cellular transport processes by recruiting dynamins to membranes. Plays a role in the reorganization of the actin cytoskeleton and in neuron morphogenesis via its interaction with cobl, and by recruiting cobl to the cell cortex. Plays a role in the regulation of neurite formation, neurite branching and the regulation of neurite length. Required for normal synaptic vesicle endocytosis; this process retrieves previously released neurotransmitters to accommodate multiple cycles of neurotransmission. Required for normal excitatory and inhibitory synaptic transmission. Required for normal embryonic development, including normal development of laterality, normal body size and shape, as well as normal brain and heart development. Required for normal development of stereocilia and kinocilia in sensory hair cells of neuromasts in the posterior lateral line organ, and thus also for balance keeping and normal swimming behavior. This chain is Protein kinase C and casein kinase substrate in neurons protein 1 (pacsin1b), found in Danio rerio (Zebrafish).